The primary structure comprises 191 residues: Nucleoside triphosphate pyrophosphatase (191 aa).

D70 acts as the Proton acceptor in catalysis.

Belongs to the Maf family. Requires a divalent metal cation as cofactor.

The protein localises to the cytoplasm. It carries out the reaction a ribonucleoside 5'-triphosphate + H2O = a ribonucleoside 5'-phosphate + diphosphate + H(+). The catalysed reaction is a 2'-deoxyribonucleoside 5'-triphosphate + H2O = a 2'-deoxyribonucleoside 5'-phosphate + diphosphate + H(+). Its function is as follows. Nucleoside triphosphate pyrophosphatase. May have a dual role in cell division arrest and in preventing the incorporation of modified nucleotides into cellular nucleic acids. The polypeptide is Nucleoside triphosphate pyrophosphatase (Synechococcus sp. (strain WH7803)).